Here is a 3079-residue protein sequence, read N- to C-terminus: MSQPTKNKKKEHGTDSKSSRMTRTLVNHILFERILPILPVESNLSTYSEVEEYSSFISCRSVLINVTVSRDANAMVEGTLELIESLLQGHEIISDKGSSDVIESILIILRLLSDALEYNWQNQESLHYNDISTHVEHDQEQKYRPKLNSILPDYSSTHSNGNKHFFHQSKPQALIPELASKLLESCAKLKFNTRTLQILQNMISHVHGNILTTLSSSILPRHKSYLTRHNHPSHCKMIDSTLGHILRFVAASNPSEYFEFIRKSVQVPVTQTHTHSHSHSHSLPSSVYNSIVPHFDLFSFIYLSKHNFKKYLELIKNLSVTLRKTIYHCLLLHYSAKAIMFWIMARPAEYYELFNLLKDNNNEHSKSLNTLNHTLFEEIHSTFNVNSMITTNQNAHQGSSSPSSSSPSSPPSSSSSDNNNQNIIAKSLSRQLSHHQSYIQQQSERKLHSSWTTNSQSSTSLSSSTSNSTTTDFSTHTQPGEYDPSLPDTPTMSNITISASSLLSQTPTPTTQLQQRLNSAAAAAAAAASPSNSTPTGYTAEQQSRASYDAHKTGHTGKDYDEHFLSVTRLDNVLELYTHFDDTEVLPHTSVLKFLTTLTMFDIDLFNELNATSFKYIPDCTMHRPKERTSSFNNTAHETGSEKTSGIKHITQGLKKLTSLPSSTKKTVKFVKMLLRNLNGNQAVSDVALLDTMRALLSFFTMTSAVFLVDRNLPSVLFAKRLIPIMGTNLSVGQDWNSKINNSLMVCLKKNSTTFVQLQLIFFSSAIQFDHELLLARLSIDTMANNLNMQKLCLYTEGFRIFFDIPSKKELRKAIAVKISKFFKTLFSIIADILLQEFPYFDEQITDIVASILDGTIINEYGTKKHFKGSSPSLCSTTRSRSGSTSQSSMTPVSPLGLDTDICPMNTLSLVGSSTSRNSDNVNSLNSSPKNLSSDPYLSHLVAPRARHALGGPSSIIRNKIPTTLTSPPGTEKSSPVQRPQTESISATPMAITNSTPLSSAAFGIRSPLQKIRTRRYSDESLGKFMKSTNNYIQEHLIPKDLNEATLQDARRIMINIFSIFKRPNSYFIIPHNINSNLQWVSQDFRNIMKPIFVAIVSPDVDLQNTAQSFMDTLLSNVITYGESDENISIEGYHLLCSYTVTLFAMGLFDLKINNEKRQILLDITVKFMKVRSHLAGIAEASHHMEYISDSEKLTFPLIMGTVGRALFVSLYSSQQKIEKTLKIAYTEYLSAINFHERNIDDADKTWVHNIEFVEAMCHDNYTTSGSIAFQRRTRNNILRFATIPNAILLDSMRMIYKKWHTYTHSKSLEKQERNDFRNFAGILASLSGILFINKKILQEMYPYLLDTVSELKKNIDSFISKQCQWLNYPDLLTRENSRDILSVELHPLSFNLLFNNLRLKLKELACSDLSIPENESSYVLLEQIIKMLRTILGRDDDNYVMMLFSTEIVDLIDLLTDEIKKIPAYCPKYLKAIIQMTKMFSALQHSEVNLGVKNHFHVKNKWLRQITDWFQVSIAREYDFENLSKPLKEMDLVKRDMDILYIDTAIEASTAIAYLTRHTFLEIPPAASDPELSRSRSVIFGFYFNILMKGLEKSSDRDNYPVFLRHKMSVLNDNVILSLTNLSNTNVDASLQFTLPMGYSGNRNIRNAFLEVFINIVTNYRTYTAKTDLGKLEAADKFLRYTIEHPQLSSFGAAVCPASDIDAYAAGLINAFETRNATHIVVAQLIKNEIEKSSRPTDILRRNSCATRSLSMLARSKGNEYLIRTLQPLLKKIIQNRDFFEIEKLKPEDSDAERQIELFVKYMNELLESISNSVSYFPPPLFYICQNIYKVACEKFPDHAIIAAGSFVFLRFFCPALVSPDSENIIDISHLSEKRTFISLAKVIQNIANGSENFSRWPALCSQKDFLKECSDRIFRFLAELCRTDRTIDIQVRTDPTPIAFDYQFLHSFVYLYGLEVRRNVLNEAKHDDGDIDGDDFYKTTFLLIDDVLGQLGQPKMEFSNEIPIYIREHMDDYPELYEFMNRHAFRNIETSTAYSPSVHESTSSEGIPIITLTMSNFSDRHVDIDTVAYKFLQIYARIWTTKHCLIIDCTEFDEGGLDMRKFISLVMGLLPEVAPKNCIGCYYFNVNETFMDNYGKCLDKDNVYVSSKIPHYFINSNSDEGLMKSVGITGQGLKVLQDIRVSLHDITLYDEKRNRFTPVSLKIGDIYFQVLHETPRQYKIRDMGTLFDVKFNDVYEISRIFEVHVSSITGVAAEFTVTFQDERRLIFSSPKYLEIVKMFYYAQIRLESEYEMDNNSSTSSPNSNNKDKQQKERTKLLCHLLLVSLIGLFDESKKMKNSSYNLIAATEASFGLNFGSHFHRSPEVYVPEDTTTFLGVIGKSLAESNPELTAYMFIYVLEALKNNVIPHVYIPHTICGLSYWIPNLYQHVYLADDEEGPENISHIFRILIRLSVRETDFKAVYMQYVWLLLLDDGRLTDIIVDEVINHALERDSENRDWKKTISLLTVLPTTEVANNIIQKILAKIRSFLPSLKLEAMTQSWSELTILVKISIHVFFETSLLVQMYLPEILFIVSLLIDVGPRELRSSLHQLLMNVCHSLAINSALPQDHRNNLDEISDIFAHQKVKFMFGFSEDKGRILQIFSASSFASKFNILDFFINNILLLMEYSSTYEANVWKTRYKKYVLESVFTSNSFLSARSIMIVGIMGKSYITEGLCKAMLIETMKVIAEPKITDEHLFLAISHIFTYSKIVEGLDPNLDLMKHLFWFSTLFLESRHPIIFEGALLFVSNCIRRLYMAQFENESETSLISTLLKGRKFAHTFLSKIENLSGIVWNEDNFTHILIFIINKGLSNPFIKSTAFDFLKMMFRNSYFEHQINQKSDHYLCYMFLLYFVLNCNQFEELLGDVDFEGEMVNIENKNTIPKILLEWLSSDNENANITLYQGAILFKCSVTDEPSRFRFALIIRHLLTKKPICALRFYSVIRNEIRKISAFEQNSDCVPLAFDILNLLVTHSESNSLEKLHEESIERLTKRGLSIVTSSGIFAKNSDMMIPLDVKPEDIYERKRIMTMILSRMSCSA.

Residues 392–554 are disordered; sequence NQNAHQGSSS…RASYDAHKTG (163 aa). Residues 399 to 416 show a composition bias toward low complexity; sequence SSSPSSSSPSSPPSSSSS. Positions 417–442 are enriched in polar residues; sequence DNNNQNIIAKSLSRQLSHHQSYIQQQ. A compositionally biased stretch (low complexity) spans 449–477; that stretch reads SSWTTNSQSSTSLSSSTSNSTTTDFSTHT. The segment covering 488-497 has biased composition (polar residues); that stretch reads DTPTMSNITI. Low complexity predominate over residues 498–528; the sequence is SASSLLSQTPTPTTQLQQRLNSAAAAAAAAA. Positions 529-546 are enriched in polar residues; that stretch reads SPSNSTPTGYTAEQQSRA. Thr635 is modified (phosphothreonine). Disordered stretches follow at residues 867–898, 912–935, and 952–980; these read FKGS…PLGL, GSST…LSSD, and GPSS…VQRP. Composition is skewed to low complexity over residues 873 to 894 and 921 to 934; these read SLCS…TPVS and NVNS…NLSS. Residues 961 to 980 show a composition bias toward polar residues; sequence IPTTLTSPPGTEKSSPVQRP. In terms of domain architecture, Ras-GAP spans 1717 to 1922; that stretch reads NATHIVVAQL…DRIFRFLAEL (206 aa).

The protein localises to the cytoplasm. Functionally, inhibitory regulator of the Ras-cyclic AMP pathway. Stimulates the GTPase activity of Ras proteins. This chain is Inhibitory regulator protein IRA2 (IRA2), found in Saccharomyces cerevisiae (strain ATCC 204508 / S288c) (Baker's yeast).